We begin with the raw amino-acid sequence, 461 residues long: Steroidogenic factor 1 (461 aa).

Residues 10-85 constitute a DNA-binding region (nuclear receptor); that stretch reads DELCPVCGDK…VGMRLEAVRA (76 aa). The NR C4-type zinc-finger motif lies at 13–33; sequence CPVCGDKVSGYHYGLLTCESC. 3 positions are modified to N6-acetyllysine: Lys-34, Lys-38, and Lys-72. An NR C4-type zinc finger spans residues 49–73; sequence CTESQSCKIDKTQRKRCPFCRFQKC. A Glycyl lysine isopeptide (Lys-Gly) (interchain with G-Cter in SUMO) cross-link involves residue Lys-119. A disordered region spans residues 119 to 157; sequence KLETGPPMGVPPPPPPAPDYVLPPSLHGPEPKGLAAGPP. The span at 126–136 shows a compositional bias: pro residues; the sequence is MGVPPPPPPAP. Lys-194 participates in a covalent cross-link: Glycyl lysine isopeptide (Lys-Gly) (interchain with G-Cter in SUMO). A Phosphoserine; by CDK7 modification is found at Ser-203. One can recognise an NR LBD domain in the interval 222–459; that stretch reads NVPELILQLL…NLLIEMLQAK (238 aa). The interval 230 to 461 is important for dimerization; that stretch reads LLQLEPDEDQ…LIEMLQAKQT (232 aa). Residues Gly-341, Tyr-436, and Lys-440 each coordinate a 1,2-diacyl-sn-glycero-3-phosphocholine. A 1,2-diacylglycero-3-phosphoethanolamine contacts are provided by Gly-341, Tyr-436, and Lys-440.

Belongs to the nuclear hormone receptor family. NR5 subfamily. Binds DNA as a monomer. Interacts with NR0B2 and PPARGC1A. Part of a complex consisting of SFPQ, NONO and NR5A1. Interacts with NCOA2. Interacts with DGKQ and CDK7. Binds to and activated by HIPK3. Acetylation stimulates the transcriptional activity. Post-translationally, sumoylation reduces CDK7-mediated phosphorylation on Ser-203. In terms of processing, phosphorylated on Ser-203 by CDK7. This phosphorylation promotes transcriptional activity. As to expression, high expressed in the adrenal cortex, the ovary, the testis, and the spleen.

The protein localises to the nucleus. Its function is as follows. Transcriptional activator. Essential for sexual differentiation and formation of the primary steroidogenic tissues. Binds to the Ad4 site found in the promoter region of steroidogenic P450 genes such as CYP11A, CYP11B and CYP21B. Also regulates the AMH/Muellerian inhibiting substance gene as well as the AHCH and STAR genes. 5'-YCAAGGYC-3' and 5'-RRAGGTCA-3' are the consensus sequences for the recognition by NR5A1. The SFPQ-NONO-NR5A1 complex binds to the CYP17 promoter and regulates basal and cAMP-dependent transcriptional activity. Binds phosphatidylcholine. Binds phospholipids with a phosphatidylinositol (PI) headgroup, in particular PI(3,4)P2 and PI(3,4,5)P3. Activated by the phosphorylation of NR5A1 by HIPK3 leading to increased steroidogenic gene expression upon cAMP signaling pathway stimulation. This Homo sapiens (Human) protein is Steroidogenic factor 1 (NR5A1).